The chain runs to 278 residues: Undecaprenyl-diphosphatase 2 (278 aa).

7 helical membrane passes run 43-63, 88-108, 119-139, 149-169, 194-214, 226-246, and 254-274; these read GAAF…VYFW, ARLG…GLFF, LYIT…ADRI, LIWR…IPGV, FLLA…KSIG, LATL…LKLV, and FVWY…TGVI.

It belongs to the UppP family.

Its subcellular location is the cell inner membrane. The catalysed reaction is di-trans,octa-cis-undecaprenyl diphosphate + H2O = di-trans,octa-cis-undecaprenyl phosphate + phosphate + H(+). Catalyzes the dephosphorylation of undecaprenyl diphosphate (UPP). Confers resistance to bacitracin. The polypeptide is Undecaprenyl-diphosphatase 2 (Agrobacterium fabrum (strain C58 / ATCC 33970) (Agrobacterium tumefaciens (strain C58))).